Reading from the N-terminus, the 37-residue chain is Large ribosomal subunit protein bL36 (37 aa).

Belongs to the bacterial ribosomal protein bL36 family.

The polypeptide is Large ribosomal subunit protein bL36 (Clostridioides difficile (strain 630) (Peptoclostridium difficile)).